The primary structure comprises 600 residues: NADH-quinone oxidoreductase subunit C/D (600 aa).

The interval 1–190 is NADH dehydrogenase I subunit C; that stretch reads MIDLMPKKNT…EPFFLNEQKE (190 aa). The interval 214–600 is NADH dehydrogenase I subunit D; the sequence is EFMFLNLGPN…IDFVMSDVDR (387 aa).

In the N-terminal section; belongs to the complex I 30 kDa subunit family. It in the C-terminal section; belongs to the complex I 49 kDa subunit family. As to quaternary structure, NDH-1 is composed of 13 different subunits. Subunits NuoB, CD, E, F, and G constitute the peripheral sector of the complex.

It localises to the cell membrane. The enzyme catalyses a quinone + NADH + 5 H(+)(in) = a quinol + NAD(+) + 4 H(+)(out). Its function is as follows. NDH-1 shuttles electrons from NADH, via FMN and iron-sulfur (Fe-S) centers, to quinones in the respiratory chain. The immediate electron acceptor for the enzyme in this species is believed to be ubiquinone. Couples the redox reaction to proton translocation (for every two electrons transferred, four hydrogen ions are translocated across the cytoplasmic membrane), and thus conserves the redox energy in a proton gradient. The chain is NADH-quinone oxidoreductase subunit C/D from Buchnera aphidicola subsp. Acyrthosiphon pisum (strain 5A).